We begin with the raw amino-acid sequence, 131 residues long: Profilin-2 (131 aa).

C13 and C115 are joined by a disulfide. An Involved in PIP2 interaction motif is present at residues 81 to 97 (AVIRGKKGAGGITIKKT). Residue T111 is modified to Phosphothreonine.

This sequence belongs to the profilin family. Occurs in many kinds of cells as a complex with monomeric actin in a 1:1 ratio. Phosphorylated by MAP kinases.

The protein resides in the cytoplasm. It localises to the cytoskeleton. Binds to actin and affects the structure of the cytoskeleton. At high concentrations, profilin prevents the polymerization of actin, whereas it enhances it at low concentrations. By binding to PIP2, it inhibits the formation of IP3 and DG. This is Profilin-2 (PRO2) from Phleum pratense (Common timothy).